A 790-amino-acid chain; its full sequence is Protein SEY1 (790 aa).

Topologically, residues 1-692 (MELSEGELSH…KRSIVQHITQ (692 aa)) are cytoplasmic. A GB1/RHD3-type G domain is found at 55 to 284 (GNNYHIISVF…VSNELFKPEY (230 aa)). Residue 65–72 (GSQSTGKS) participates in GTP binding. Residues 693–713 (IPYYIYLIILVLGWNEFMAII) form a helical membrane-spanning segment. Residues 714–716 (RNP) are Lumenal-facing. A helical transmembrane segment spans residues 717–737 (LFFSLSIVLGATVYVLYYLGL). Residues 738-790 (LRPALVVAQRTMDEVIVMAKTKLREVLIDDHEVTGRQLNKMAGSKENIELDDM) are Cytoplasmic-facing.

This sequence belongs to the TRAFAC class dynamin-like GTPase superfamily. GB1/RHD3 GTPase family. RHD3 subfamily.

Its subcellular location is the endoplasmic reticulum membrane. Its function is as follows. Cooperates with the reticulon proteins and tubule-shaping DP1 family proteins to generate and maintain the structure of the tubular endoplasmic reticulum network. Has GTPase activity, which is required for its function in ER organization. The protein is Protein SEY1 of Candida albicans (strain WO-1) (Yeast).